The primary structure comprises 148 residues: Small ribosomal subunit protein uS15 (148 aa).

Residues 1-23 (MRKSKEKGRSGSTRPPQLKKPEW) form a disordered region.

It belongs to the universal ribosomal protein uS15 family. Part of the 30S ribosomal subunit.

This Thermofilum pendens (strain DSM 2475 / Hrk 5) protein is Small ribosomal subunit protein uS15.